The sequence spans 301 residues: ATP synthase gamma chain (301 aa).

It belongs to the ATPase gamma chain family. F-type ATPases have 2 components, CF(1) - the catalytic core - and CF(0) - the membrane proton channel. CF(1) has five subunits: alpha(3), beta(3), gamma(1), delta(1), epsilon(1). CF(0) has three main subunits: a, b and c.

It localises to the cell inner membrane. Its function is as follows. Produces ATP from ADP in the presence of a proton gradient across the membrane. The gamma chain is believed to be important in regulating ATPase activity and the flow of protons through the CF(0) complex. In Helicobacter pylori (strain G27), this protein is ATP synthase gamma chain.